Consider the following 231-residue polypeptide: uncharacterized protein (231 aa).

Residue 10-34 coordinates NADP(+); sequence VVTGAGSGIGEAIATLLHEEGAKVV. Serine 140 contacts substrate. The active-site Proton acceptor is the tyrosine 153.

This sequence belongs to the short-chain dehydrogenases/reductases (SDR) family.

This is an uncharacterized protein from Staphylococcus aureus (strain N315).